Reading from the N-terminus, the 164-residue chain is Large ribosomal subunit protein eL24 (164 aa).

Disordered stretches follow at residues Lys63–Ser82 and Glu117–Ala164. Residues Lys71 to Tyr81 are compositionally biased toward basic residues. Residues Glu117–Val133 show a composition bias toward basic and acidic residues.

The protein belongs to the eukaryotic ribosomal protein eL24 family.

The protein resides in the cytoplasm. The polypeptide is Large ribosomal subunit protein eL24 (RPL24) (Cicer arietinum (Chickpea)).